Reading from the N-terminus, the 111-residue chain is MNRKYYFNNMWWGWVTGGYMLYMSWDYEFKYRLLFWCISLCGMVLYPVAKWYIEDTALKFTRPDFWNSGFFADTPGKMGLLAVYTGTVFILSLPLSMIYILSVIIKRLSVR.

A run of 2 helical transmembrane segments spans residues 33–53 (LLFW…KWYI) and 85–105 (TGTV…SVII).

The protein resides in the cell membrane. Functionally, this protein is able to protect a cell, which harbors the plasmid ColIa-CA53 encoding colicin Ia, against colicin Ia. The polypeptide is Colicin-Ia immunity protein (Escherichia coli).